The chain runs to 1000 residues: C2 domain-containing protein 5 (1000 aa).

Residues 1–109 enclose the C2 domain; sequence MPGKLKVKIV…EAATVISGWF (109 aa). Aspartate 19, aspartate 26, aspartate 76, aspartate 78, serine 81, and aspartate 84 together coordinate Ca(2+). A Phosphoserine; by PKB/AKT2 modification is found at serine 197. Residues serine 200 and serine 260 each carry the phosphoserine modification. The segment at 265–330 is disordered; the sequence is MKEIPFNEDP…SGSAGKEGGP (66 aa). Polar residues predominate over residues 274-289; it reads PNPNTHSSGPSTPLKN. The segment covering 290–318 has biased composition (low complexity); the sequence is QTYSFSPSKSYSRQSSSSDTDLSLTPKTG. Phosphoserine occurs at positions 293, 295, 304, 305, and 306. Threonine 317 is modified (phosphothreonine). Residues 319–328 show a composition bias toward gly residues; it reads MGSGSAGKEG. The residue at position 323 (serine 323) is a Phosphoserine. A Phosphothreonine modification is found at threonine 601. Residues 639 to 669 are disordered; it reads EIIGSPIPEPRQRSRLLRSQSESSDEVTELD. Phosphoserine is present on residues serine 643, serine 657, serine 659, serine 661, and serine 662. At threonine 666 the chain carries Phosphothreonine. Residue serine 671 is modified to Phosphoserine. Threonine 807 is modified (phosphothreonine). 2 positions are modified to phosphoserine: serine 817 and serine 852.

Ca(2+) serves as cofactor. Post-translationally, phosphorylated on Ser-197 by active myristoylated kinase AKT2; insulin-stimulated phosphorylation by AKT2 regulates SLC2A4/GLUT4 translocation into the plasma membrane.

The protein resides in the cytoplasmic vesicle membrane. It is found in the cytoplasm. The protein localises to the cell cortex. Its subcellular location is the cell membrane. It localises to the cell projection. The protein resides in the ruffle. In terms of biological role, required for insulin-stimulated glucose transport and glucose transporter SLC2A4/GLUT4 translocation from intracellular glucose storage vesicle (GSV) to the plasma membrane (PM) in adipocytes. Binds phospholipid membranes in a calcium-dependent manner and is necessary for the optimal membrane fusion between SLC2A4/GLUT4 GSV and the PM. This is C2 domain-containing protein 5 (C2CD5) from Homo sapiens (Human).